Consider the following 501-residue polypeptide: MNDFSKEAVKPADSATAAAKAEKRSRYAAGVMKYREMGYWQPDYTPKDTDVIALFRITPQPGVEPEEAAAAVAGESSTATWTVVWTDRLTACDMYRAKAFRVEPVPNPAEGEPQYFAFIAYELDLFEEGSVANLTASIIGNVFGFKPLKALRLEDMRIPVAYLKTFQGPPTGIVVERERLDKYGRPLLGATVKPKLGLSGKNYGRVVYEGLKGGLDFLKDDENINSQPFMHWRDRYLFAMEAVHRAQAETGEVKGHYLNVTAGTMEDMYERAEFAKELGSCIVMIDLVIGWTAITSMGRWARKNDMILHLHRAGHGTYTRQRNHGISFRVIAKWLRMAGVDHAHAGTAVGKLDGDPLSVQGYYNVLRESHNSVDLTRGIFFDQHWAGLRKVMPVASGGIHAGQMHQLLDLFGDDAILQFGGGTIGHPSGIQAGATANRVALETMVKARNEGRDIANEGSDLLEAAARHCTPLKQALDTWGDVTFNYTPTDSPDFAVTPSVA.

Substrate-binding residues include asparagine 141 and threonine 191. The Proton acceptor role is filled by lysine 193. Residue lysine 195 participates in substrate binding. 3 residues coordinate Mg(2+): lysine 219, aspartate 221, and glutamate 222. Position 219 is an N6-carboxylysine (lysine 219). The Proton acceptor role is filled by histidine 311. Substrate is bound by residues arginine 312, histidine 344, and serine 396.

It belongs to the RuBisCO large chain family. Type I subfamily. In terms of assembly, heterohexadecamer of 8 large chains and 8 small chains. It depends on Mg(2+) as a cofactor.

The enzyme catalyses 2 (2R)-3-phosphoglycerate + 2 H(+) = D-ribulose 1,5-bisphosphate + CO2 + H2O. It carries out the reaction D-ribulose 1,5-bisphosphate + O2 = 2-phosphoglycolate + (2R)-3-phosphoglycerate + 2 H(+). Functionally, ruBisCO catalyzes two reactions: the carboxylation of D-ribulose 1,5-bisphosphate, the primary event in carbon dioxide fixation, as well as the oxidative fragmentation of the pentose substrate. Both reactions occur simultaneously and in competition at the same active site. This Paraburkholderia phymatum (strain DSM 17167 / CIP 108236 / LMG 21445 / STM815) (Burkholderia phymatum) protein is Ribulose bisphosphate carboxylase large chain.